A 351-amino-acid polypeptide reads, in one-letter code: Histidinol-phosphate aminotransferase (351 aa).

An N6-(pyridoxal phosphate)lysine modification is found at Lys-214.

The protein belongs to the class-II pyridoxal-phosphate-dependent aminotransferase family. Histidinol-phosphate aminotransferase subfamily. The cofactor is pyridoxal 5'-phosphate.

The catalysed reaction is L-histidinol phosphate + 2-oxoglutarate = 3-(imidazol-4-yl)-2-oxopropyl phosphate + L-glutamate. It functions in the pathway amino-acid biosynthesis; L-histidine biosynthesis; L-histidine from 5-phospho-alpha-D-ribose 1-diphosphate: step 7/9. The protein is Histidinol-phosphate aminotransferase of Methanosphaerula palustris (strain ATCC BAA-1556 / DSM 19958 / E1-9c).